Consider the following 391-residue polypeptide: Succinate--CoA ligase [ADP-forming] subunit beta (391 aa).

An ATP-grasp domain is found at 9-246; that stretch reads KHLFADYDIP…ITQEDEAEVQ (238 aa). Residues lysine 46, 53 to 55, glutamate 99, leucine 102, and glutamate 107 contribute to the ATP site; that span reads GRG. 2 residues coordinate Mg(2+): asparagine 199 and aspartate 213. Residues asparagine 266 and 323–325 contribute to the substrate site; that span reads GIV.

This sequence belongs to the succinate/malate CoA ligase beta subunit family. As to quaternary structure, heterotetramer of two alpha and two beta subunits. Mg(2+) serves as cofactor.

The catalysed reaction is succinate + ATP + CoA = succinyl-CoA + ADP + phosphate. The enzyme catalyses GTP + succinate + CoA = succinyl-CoA + GDP + phosphate. It functions in the pathway carbohydrate metabolism; tricarboxylic acid cycle; succinate from succinyl-CoA (ligase route): step 1/1. Its function is as follows. Succinyl-CoA synthetase functions in the citric acid cycle (TCA), coupling the hydrolysis of succinyl-CoA to the synthesis of either ATP or GTP and thus represents the only step of substrate-level phosphorylation in the TCA. The beta subunit provides nucleotide specificity of the enzyme and binds the substrate succinate, while the binding sites for coenzyme A and phosphate are found in the alpha subunit. The protein is Succinate--CoA ligase [ADP-forming] subunit beta of Alkalilimnicola ehrlichii (strain ATCC BAA-1101 / DSM 17681 / MLHE-1).